A 70-amino-acid polypeptide reads, in one-letter code: Conotoxin ArMKLT2-0112 (70 aa).

A signal peptide spans 1 to 22; that stretch reads MKLTCVLIIAVLFLTACQLTTG. Residues 23–40 constitute a propeptide that is removed on maturation; the sequence is EQKDHALRSTDKNSKLTR. Pyrrolidone carboxylic acid is present on Gln-41. 3 disulfides stabilise this stretch: Cys-42/Cys-56, Cys-49/Cys-60, and Cys-55/Cys-67.

It belongs to the conotoxin O1 superfamily. As to expression, expressed by the venom duct.

Its subcellular location is the secreted. In Conus arenatus (Sand-dusted cone), this protein is Conotoxin ArMKLT2-0112.